The following is a 570-amino-acid chain: Spermatocyte protein spe-26 (570 aa).

6 Kelch repeats span residues 244-291 (VLII…IVDG), 293-338 (LYLF…SVVY), 341-393 (RIYV…VFEN), 395-440 (IYVS…NHGN), 442-487 (LLIV…SYKG), and 489-535 (LFSV…VAPN).

Testis, in both spermatogonial cells and spermatocytes.

It localises to the cytoplasm. Its subcellular location is the cytoskeleton. In terms of biological role, may play a role in the spermatocyte cytoskeleton, possibly interacting with actin. The polypeptide is Spermatocyte protein spe-26 (spe-26) (Caenorhabditis elegans).